The sequence spans 262 residues: Cytochrome c oxidase subunit 3 (262 aa).

A run of 6 helical transmembrane segments spans residues tyrosine 39–tryptophan 59, glycine 83–phenylalanine 103, methionine 120–alanine 140, glycine 163–isoleucine 183, phenylalanine 198–valine 218, and alanine 240–tryptophan 260.

It belongs to the cytochrome c oxidase subunit 3 family. In terms of assembly, component of the cytochrome c oxidase (complex IV, CIV), a multisubunit enzyme composed of a catalytic core of 3 subunits and several supernumerary subunits. The complex exists as a monomer or a dimer and forms supercomplexes (SCs) in the inner mitochondrial membrane with ubiquinol-cytochrome c oxidoreductase (cytochrome b-c1 complex, complex III, CIII).

The protein resides in the mitochondrion inner membrane. It catalyses the reaction 4 Fe(II)-[cytochrome c] + O2 + 8 H(+)(in) = 4 Fe(III)-[cytochrome c] + 2 H2O + 4 H(+)(out). In terms of biological role, component of the cytochrome c oxidase, the last enzyme in the mitochondrial electron transport chain which drives oxidative phosphorylation. The respiratory chain contains 3 multisubunit complexes succinate dehydrogenase (complex II, CII), ubiquinol-cytochrome c oxidoreductase (cytochrome b-c1 complex, complex III, CIII) and cytochrome c oxidase (complex IV, CIV), that cooperate to transfer electrons derived from NADH and succinate to molecular oxygen, creating an electrochemical gradient over the inner membrane that drives transmembrane transport and the ATP synthase. Cytochrome c oxidase is the component of the respiratory chain that catalyzes the reduction of oxygen to water. Electrons originating from reduced cytochrome c in the intermembrane space (IMS) are transferred via the dinuclear copper A center (CU(A)) of subunit 2 and heme A of subunit 1 to the active site in subunit 1, a binuclear center (BNC) formed by heme A3 and copper B (CU(B)). The BNC reduces molecular oxygen to 2 water molecules using 4 electrons from cytochrome c in the IMS and 4 protons from the mitochondrial matrix. In Drosophila melanogaster (Fruit fly), this protein is Cytochrome c oxidase subunit 3 (mt:CoIII).